We begin with the raw amino-acid sequence, 236 residues long: Small ribosomal subunit protein uS2c (236 aa).

It belongs to the universal ribosomal protein uS2 family.

The protein localises to the plastid. Its subcellular location is the chloroplast. The protein is Small ribosomal subunit protein uS2c (rps2) of Lotus japonicus (Lotus corniculatus var. japonicus).